The chain runs to 630 residues: DELLA protein DWARF8 (630 aa).

The interval 1–35 (MKREYQDAGGSGGDMGSSKDKMMAAAAGAGEQEEE) is disordered. The short motif at 38–42 (DELLA) is the DELLA motif element. The tract at residues 161–222 (PIPSPVAAPS…AAPPATQASA (62 aa)) is disordered. 2 stretches are compositionally biased toward low complexity: residues 165–176 (PVAAPSADPSTD) and 191–222 (TSSSSSSSSSMDGGRTRSSVVEAAPPATQASA). Residues 234–623 (VDTQEAGIRL…RPLIATSAWR (390 aa)) form the GRAS domain. Residues 241–297 (IRLVHALLACAEAVQQENFSAAEALVKQIPMLASSQGGAMRKVAAYFGEALARRVYR) form a leucine repeat I (LRI) region. The short motif at 248–252 (LACAE) is the LxCxE motif element. The segment at 316-381 (HAHFYESCPY…GGPPSFRLTG (66 aa)) is VHIID. The VHIID signature appears at 347–351 (VHVVD). The tract at residues 395–427 (QVGWKLAQFAHTIRVDFQYRGLVAATLADLEPF) is leucine repeat II (LRII). Residues 443 to 544 (IAVNSVFELH…EVYLGRQICN (102 aa)) form a PFYRE region. Positions 451–455 (LHRLL) match the LXXLL motif motif. Residues 547–623 (ACEGAERTER…RPLIATSAWR (77 aa)) form an SAW region.

It belongs to the GRAS family. DELLA subfamily. Phosphorylated. In terms of processing, ubiquitinated. Upon GA application it is ubiquitinated, leading to its subsequent degradation.

It localises to the nucleus. Probable transcriptional regulator that acts as a repressor of the gibberellin (GA) signaling pathway. Probably acts by participating in large multiprotein complexes that repress transcription of GA-inducible genes. Upon GA application, it is degraded by the proteasome, allowing the GA signaling pathway. This Zea mays (Maize) protein is DELLA protein DWARF8 (D8).